The primary structure comprises 309 residues: Palmitoyltransferase ZDHHC19 (309 aa).

The next 2 helical transmembrane spans lie at 29 to 49 and 59 to 79; these read LFAA…FAFP and WAFP…LVSL. The region spanning 112–162 is the DHHC domain; it reads QWCPKCCFHRPPRTYHCPWCNICVEDFDHHCKWVNNCIGHRNFRFFMLLVL. Cys-142 serves as the catalytic S-palmitoyl cysteine intermediate. 2 helical membrane-spanning segments follow: residues 160 to 180 and 193 to 213; these read LVLS…IFLV and IAIV…LLLL. Pro residues predominate over residues 280–294; it reads LHPPMSPSALNPPAP. Residues 280–309 are disordered; that stretch reads LHPPMSPSALNPPAPTSGSLQSREGTPGAW.

This sequence belongs to the DHHC palmitoyltransferase family.

The protein localises to the golgi apparatus membrane. Its subcellular location is the cytoplasm. The protein resides in the perinuclear region. It carries out the reaction L-cysteinyl-[protein] + hexadecanoyl-CoA = S-hexadecanoyl-L-cysteinyl-[protein] + CoA. Functionally, palmitoyltransferase that mediates palmitoylation oproteins, such as RRAS and SQSTM1. Catalyzes palmitoylation of RRAS, leading to increased cell viability. Acts as a positive regulator of autophagy by mediating palmitoylation of SQSTM1, promoting affinity between SQSTM1 and ATG8 proteins and recruitment of ubiquitinated cargo proteins to autophagosomes. (Microbial infection) Promotes Chikungunya virus (CHIKV) replication by mediating viral nsp1 palmitoylation. This is Palmitoyltransferase ZDHHC19 from Homo sapiens (Human).